A 613-amino-acid polypeptide reads, in one-letter code: Kelch-like protein 36 (613 aa).

Residues 45-112 (CDVVLVVEEQ…LYSSELELDG (68 aa)) form the BTB domain. In terms of domain architecture, BACK spans 147 to 249 (YLYLQELASI…PEDILLQRVK (103 aa)). Kelch repeat units follow at residues 294–343 (CLLF…VLGG), 344–395 (FIFV…SIED), 396–442 (MLVA…IYKD), 444–491 (VYIS…SLGD), 492–544 (SIYS…VWQG), and 545–593 (RIYI…VCAL).

In terms of assembly, interacts with CUL3.

Its pathway is protein modification; protein ubiquitination. Probable substrate-specific adapter of an E3 ubiquitin-protein ligase complex which mediates the ubiquitination and subsequent proteasomal degradation of target proteins. This Rattus norvegicus (Rat) protein is Kelch-like protein 36 (Klhl36).